Here is an 86-residue protein sequence, read N- to C-terminus: MARLTVEDCIDNIDNRFLLVLAAAKRARQLAMGATPTVPWDKDKPTVVALREIAEGHIDVGVMDTASAREHAKESQVSEEEVREES.

Residues 67-76 (SAREHAKESQ) show a composition bias toward basic and acidic residues. Positions 67 to 86 (SAREHAKESQVSEEEVREES) are disordered. Residues 77–86 (VSEEEVREES) are compositionally biased toward acidic residues.

It belongs to the RNA polymerase subunit omega family. In terms of assembly, the RNAP catalytic core consists of 2 alpha, 1 beta, 1 beta' and 1 omega subunit. When a sigma factor is associated with the core the holoenzyme is formed, which can initiate transcription.

The enzyme catalyses RNA(n) + a ribonucleoside 5'-triphosphate = RNA(n+1) + diphosphate. In terms of biological role, promotes RNA polymerase assembly. Latches the N- and C-terminal regions of the beta' subunit thereby facilitating its interaction with the beta and alpha subunits. The sequence is that of DNA-directed RNA polymerase subunit omega from Nitrosococcus oceani (strain ATCC 19707 / BCRC 17464 / JCM 30415 / NCIMB 11848 / C-107).